The sequence spans 473 residues: Serine palmitoyltransferase 1 (473 aa).

At M1 to Q15 the chain is on the lumenal side. The interaction with SPTLC2 stretch occupies residues M1–P66. The helical transmembrane segment at A16 to I36 threads the bilayer. The Cytoplasmic portion of the chain corresponds to R37–L473. A Phosphotyrosine; by ABL modification is found at Y164.

The protein belongs to the class-II pyridoxal-phosphate-dependent aminotransferase family. As to quaternary structure, component of the serine palmitoyltransferase (SPT) complex, which is also composed of SPTLC2 or SPTLC3 and SPTSSA or SPTSSB. The heterodimer consisting of SPTLC1 and SPTLC2/SPTLC3 forms the catalytic core of the enzyme, while SPTSSA or SPTSSB subunits determine substrate specificity. SPT also interacts with ORMDL proteins, especially ORMDL3, which negatively regulate SPT activity in the presence of ceramides. Forms dimers of heterodimers with SPTLC2. Interacts with RTN4 (isoform B). Requires pyridoxal 5'-phosphate as cofactor. Post-translationally, phosphorylation at Tyr-164 inhibits activity and promotes cell survival. Widely expressed. Not detected in small intestine.

Its subcellular location is the endoplasmic reticulum membrane. The catalysed reaction is L-serine + hexadecanoyl-CoA + H(+) = 3-oxosphinganine + CO2 + CoA. It carries out the reaction octadecanoyl-CoA + L-serine + H(+) = 3-oxoeicosasphinganine + CO2 + CoA. The enzyme catalyses tetradecanoyl-CoA + L-serine + H(+) = 3-oxohexadecasphinganine + CO2 + CoA. It catalyses the reaction dodecanoyl-CoA + L-serine + H(+) = 3-oxotetradecasphinganine + CO2 + CoA. Its pathway is lipid metabolism; sphingolipid metabolism. SPT complex catalytic activity is negatively regulated by ORMDL proteins, including ORMDL3, in the presence of ceramides. This mechanism allows to maintain ceramide levels at sufficient concentrations for the production of complex sphingolipids, but which prevents the accumulation of ceramides to levels that trigger apoptosis. Its function is as follows. Component of the serine palmitoyltransferase multisubunit enzyme (SPT) that catalyzes the initial and rate-limiting step in sphingolipid biosynthesis by condensing L-serine and activated acyl-CoA (most commonly palmitoyl-CoA) to form long-chain bases. The SPT complex is also composed of SPTLC2 or SPTLC3 and SPTSSA or SPTSSB. Within this complex, the heterodimer with SPTLC2 or SPTLC3 forms the catalytic core. The composition of the serine palmitoyltransferase (SPT) complex determines the substrate preference. The SPTLC1-SPTLC2-SPTSSA complex shows a strong preference for C16-CoA substrate, while the SPTLC1-SPTLC3-SPTSSA isozyme uses both C14-CoA and C16-CoA as substrates, with a slight preference for C14-CoA. The SPTLC1-SPTLC2-SPTSSB complex shows a strong preference for C18-CoA substrate, while the SPTLC1-SPTLC3-SPTSSB isozyme displays an ability to use a broader range of acyl-CoAs, without apparent preference. Required for adipocyte cell viability and metabolic homeostasis. In Homo sapiens (Human), this protein is Serine palmitoyltransferase 1 (SPTLC1).